Consider the following 78-residue polypeptide: DNA-directed RNA polymerase subunit Rpo5 (78 aa).

The protein belongs to the archaeal Rpo5/eukaryotic RPB5 RNA polymerase subunit family. Part of the RNA polymerase complex.

It localises to the cytoplasm. It carries out the reaction RNA(n) + a ribonucleoside 5'-triphosphate = RNA(n+1) + diphosphate. Functionally, DNA-dependent RNA polymerase (RNAP) catalyzes the transcription of DNA into RNA using the four ribonucleoside triphosphates as substrates. This chain is DNA-directed RNA polymerase subunit Rpo5, found in Methanosarcina barkeri (strain Fusaro / DSM 804).